The following is a 502-amino-acid chain: ATP synthase subunit alpha (502 aa).

Residue 169-176 (GDRQTGKT) participates in ATP binding.

Belongs to the ATPase alpha/beta chains family. F-type ATPases have 2 components, CF(1) - the catalytic core - and CF(0) - the membrane proton channel. CF(1) has five subunits: alpha(3), beta(3), gamma(1), delta(1), epsilon(1). CF(0) has three main subunits: a(1), b(2) and c(9-12). The alpha and beta chains form an alternating ring which encloses part of the gamma chain. CF(1) is attached to CF(0) by a central stalk formed by the gamma and epsilon chains, while a peripheral stalk is formed by the delta and b chains.

Its subcellular location is the cell membrane. It carries out the reaction ATP + H2O + 4 H(+)(in) = ADP + phosphate + 5 H(+)(out). In terms of biological role, produces ATP from ADP in the presence of a proton gradient across the membrane. The alpha chain is a regulatory subunit. The chain is ATP synthase subunit alpha from Exiguobacterium sibiricum (strain DSM 17290 / CCUG 55495 / CIP 109462 / JCM 13490 / 255-15).